We begin with the raw amino-acid sequence, 532 residues long: Nitrogenase molybdenum-iron protein alpha chain (532 aa).

Residues Cys-62, Cys-88, and Cys-153 each coordinate [8Fe-7S] cluster. 2 residues coordinate [7Fe-Mo-9S-C-homocitryl] cluster: Cys-271 and His-489.

It belongs to the NifD/NifK/NifE/NifN family. In terms of assembly, tetramer of two alpha and two beta chains. Forms complex with the iron protein (nitrogenase component 2). The cofactor is [8Fe-7S] cluster. It depends on [7Fe-Mo-9S-C-homocitryl] cluster as a cofactor.

The catalysed reaction is N2 + 8 reduced [2Fe-2S]-[ferredoxin] + 16 ATP + 16 H2O = H2 + 8 oxidized [2Fe-2S]-[ferredoxin] + 2 NH4(+) + 16 ADP + 16 phosphate + 6 H(+). This molybdenum-iron protein is part of the nitrogenase complex that catalyzes the key enzymatic reactions in nitrogen fixation. The chain is Nitrogenase molybdenum-iron protein alpha chain (nifD2) from Methanosarcina barkeri.